Here is an 83-residue protein sequence, read N- to C-terminus: Subtilisin-chymotrypsin inhibitor CI-1B (83 aa).

The disordered stretch occupies residues 1–28; that stretch reads MRSMEGSVPKYPEPTEGSIGASGAKRSW.

The protein belongs to the protease inhibitor I13 (potato type I serine protease inhibitor) family.

Inhibits both subtilisin and chymotrypsin. The sequence is that of Subtilisin-chymotrypsin inhibitor CI-1B from Hordeum vulgare (Barley).